A 406-amino-acid polypeptide reads, in one-letter code: MTEKIVLAYSGGLDTSVAIPWLKDKGYEVIAVVLNVGQPNADFDAIQQKALNVGALDSIVVDAQDEFADHYVAPVIKANALYEGDYPLVSALSRPLIIEHLVKIAHAQNATAIAHGSTGKGNDQVRFEAAIHALDPEMKIEAPIRDFHWSREEEIDYAKEHNVPVPIGKKSPYSIDANLWGRANEAGILENPWNQAPDDAWGMTVSPEAAPDDPTFIDLTFKQGVPVALNDEPMALATMIKELNKLAGDNGIGRIDKIENRLVGIKSREVYEAPAAAVIMAAHHDLENLTLERDVQHFKPTIEDKITNMIYEAQWISPLFDALMAFIDKTQAVVNGTVKMKLYKGNATAVARKSAHNSLYDEDLATYTSADSFDQEAAAGFIKLWTLPTTVFEQVNHVHSEEKQHD.

Position 8-16 (8-16 (AYSGGLDTS)) interacts with ATP. Tyrosine 86 contacts L-citrulline. An ATP-binding site is contributed by glycine 116. 3 residues coordinate L-aspartate: threonine 118, asparagine 122, and aspartate 123. Asparagine 122 provides a ligand contact to L-citrulline. Arginine 126, serine 174, glutamate 259, and tyrosine 271 together coordinate L-citrulline.

It belongs to the argininosuccinate synthase family. Type 1 subfamily. In terms of assembly, homotetramer.

It localises to the cytoplasm. It catalyses the reaction L-citrulline + L-aspartate + ATP = 2-(N(omega)-L-arginino)succinate + AMP + diphosphate + H(+). The protein operates within amino-acid biosynthesis; L-arginine biosynthesis; L-arginine from L-ornithine and carbamoyl phosphate: step 2/3. The sequence is that of Argininosuccinate synthase from Lacticaseibacillus paracasei (strain ATCC 334 / BCRC 17002 / CCUG 31169 / CIP 107868 / KCTC 3260 / NRRL B-441) (Lactobacillus paracasei).